Here is a 544-residue protein sequence, read N- to C-terminus: Potential vesicular glutamate transporter vglu-3 (544 aa).

The Cytoplasmic segment spans residues 1–49 (MPNGSIRNCANAVADTVRQTFSRKTWEHKEQLQTITEQKKFFLRKVRWQ). A helical transmembrane segment spans residues 50 to 70 (IAILAHFGFAISFGIRSNFGV). Residues 71 to 104 (AKNRMVNNFTDAYGEVHEREFLWTGAEVGMMESS) lie on the Extracellular side of the membrane. Residue Asn78 is glycosylated (N-linked (GlcNAc...) asparagine). The helical transmembrane segment at 105–125 (FFYGYAASQIPAGVLAAKFAP) threads the bilayer. Over 126–127 (NK) the chain is Cytoplasmic. Residues 128–148 (IFMLGILVASFMNILSAISFN) form a helical membrane-spanning segment. At 149–154 (FHPYTD) the chain is on the extracellular side. A helical transmembrane segment spans residues 155–175 (IFVMVVQAVQGLALGVLYPAM). Residues 176-193 (HGVWKFWAPPLERSKLAT) are Cytoplasmic-facing. Residues 194 to 214 (TAFTGSSVGVMTGLPASAYLV) traverse the membrane as a helical segment. Over 215-219 (SHFSW) the chain is Extracellular. The chain crosses the membrane as a helical span at residues 220–240 (STPFYVFGVVGIIWSLIWMYV). Over 241 to 285 (SSHSPETHGYISDDEKKQVTEKIGDVAVKNMSLTTLPWRDMMTSS) the chain is Cytoplasmic. A helical membrane pass occupies residues 286-306 (AVWAIIICTFCRSWGFFLLLG). Over 307 to 323 (NQLTYMKDVLHIDIKNS) the chain is Extracellular. Residues 324–344 (GFISIFPQFGMCIVTLATGQL) form a helical membrane-spanning segment. Over 345-360 (CDYLRSSGKMSTEAVR) the chain is Cytoplasmic. The helical transmembrane segment at 361 to 381 (KSVNTFGFTVEAMMLGCLAFV) threads the bilayer. The Extracellular segment spans residues 382-384 (RDP). A helical membrane pass occupies residues 385 to 405 (VIAVTCLVIACTGSGSVLSGF). The Cytoplasmic portion of the chain corresponds to 406–416 (NVNHFDIAPRY). A helical membrane pass occupies residues 417–437 (APILMGIANGLGAVAGVGGMV). Residues 438 to 450 (TNTVTYQNPDGWK) are Extracellular-facing. A helical membrane pass occupies residues 451-471 (WVFLLAMAIDIFGVIFFLIFA). Residues 472–544 (KGDVLPWARE…APAEKSESSS (73 aa)) are Cytoplasmic-facing. Positions 501–544 (SLSRKTRNREGDTSYEKMEEDSEMKPCSKKVEARAPAEKSESSS) are disordered. The segment covering 508 to 544 (NREGDTSYEKMEEDSEMKPCSKKVEARAPAEKSESSS) has biased composition (basic and acidic residues).

The protein belongs to the major facilitator superfamily. Sodium/anion cotransporter family. VGLUT subfamily.

It is found in the membrane. In Caenorhabditis elegans, this protein is Potential vesicular glutamate transporter vglu-3 (vglu-3).